Here is a 131-residue protein sequence, read N- to C-terminus: Small ribosomal subunit protein uS8 (131 aa).

This sequence belongs to the universal ribosomal protein uS8 family. Part of the 30S ribosomal subunit. Contacts proteins S5 and S12.

In terms of biological role, one of the primary rRNA binding proteins, it binds directly to 16S rRNA central domain where it helps coordinate assembly of the platform of the 30S subunit. This chain is Small ribosomal subunit protein uS8, found in Porphyromonas gingivalis (strain ATCC 33277 / DSM 20709 / CIP 103683 / JCM 12257 / NCTC 11834 / 2561).